The chain runs to 547 residues: Chaperonin GroEL 1 (547 aa).

Residues 29-32 (TLGP), 86-90 (DGTTT), Gly418, 482-484 (NAA), and Asp498 each bind ATP.

This sequence belongs to the chaperonin (HSP60) family. As to quaternary structure, forms a cylinder of 14 subunits composed of two heptameric rings stacked back-to-back. Interacts with the co-chaperonin GroES.

The protein localises to the cytoplasm. It carries out the reaction ATP + H2O + a folded polypeptide = ADP + phosphate + an unfolded polypeptide.. Its function is as follows. Together with its co-chaperonin GroES, plays an essential role in assisting protein folding. The GroEL-GroES system forms a nano-cage that allows encapsulation of the non-native substrate proteins and provides a physical environment optimized to promote and accelerate protein folding. The protein is Chaperonin GroEL 1 of Corynebacterium jeikeium (strain K411).